The sequence spans 246 residues: Ribulose-phosphate 3-epimerase (246 aa).

S9 contacts substrate. A divalent metal cation is bound by residues H34, D36, and H83. The Proton acceptor role is filled by D36. Residues H83, 159 to 162, 188 to 190, and 210 to 212 contribute to the substrate site; these read GFGG, DGG, and GTS. D188 serves as a coordination point for a divalent metal cation. The active-site Proton donor is the D188.

Belongs to the ribulose-phosphate 3-epimerase family. Co(2+) serves as cofactor. The cofactor is Fe(2+). Requires Mn(2+) as cofactor. It depends on Zn(2+) as a cofactor.

It catalyses the reaction D-ribulose 5-phosphate = D-xylulose 5-phosphate. Its pathway is carbohydrate degradation; pentose phosphate pathway; D-xylulose 5-phosphate from D-ribulose 5-phosphate (non-oxidative stage): step 1/1. Functionally, catalyzes the reversible epimerization of D-ribulose 5-phosphate to D-xylulose 5-phosphate. This is Ribulose-phosphate 3-epimerase (RPE1) from Candida glabrata (strain ATCC 2001 / BCRC 20586 / JCM 3761 / NBRC 0622 / NRRL Y-65 / CBS 138) (Yeast).